The sequence spans 643 residues: Threonine--tRNA ligase (643 aa).

The TGS domain occupies 3–64 (DMINITFPDG…QEDGAVEIIT (62 aa)). The catalytic stretch occupies residues 245–542 (DHRKLGKELK…LIEEHKGALP (298 aa)). Zn(2+)-binding residues include Cys-338, His-389, and His-519.

The protein belongs to the class-II aminoacyl-tRNA synthetase family. In terms of assembly, homodimer. Zn(2+) serves as cofactor.

The protein localises to the cytoplasm. It catalyses the reaction tRNA(Thr) + L-threonine + ATP = L-threonyl-tRNA(Thr) + AMP + diphosphate + H(+). Functionally, catalyzes the attachment of threonine to tRNA(Thr) in a two-step reaction: L-threonine is first activated by ATP to form Thr-AMP and then transferred to the acceptor end of tRNA(Thr). Also edits incorrectly charged L-seryl-tRNA(Thr). The protein is Threonine--tRNA ligase of Bacillus velezensis (strain DSM 23117 / BGSC 10A6 / LMG 26770 / FZB42) (Bacillus amyloliquefaciens subsp. plantarum).